The primary structure comprises 578 residues: MKASRFFIGTLKEAPADAEIVSHKLMVRAGMIRRVAGGIYNYLPVGLRSIRKVEAIVREEMNRAGAIELLMPAVQPAELWQESGRWEQYGPELLRFKDRKQNEFVIGPTHEEVVTDIARNQIKSYRQMPVNFYQIQTKFRDEIRPRFGVMRGREFIMKDAYSFDKDHESLKESYKKMYDAYVRIFTRIGFEFRPVAADNGSIGGSGSHEFHVIADTGEDAIAYCPTSDFAANVEAAEALPLLASRAAPAEAMQKVATPGKAKCEAVAELMGIPLERTIKSIVLATDNEGAEPTIWLLMLRGDHDLNEIKTAKLPGLAGHRFATEAEIVEWFGTPPGYLGPIGTKKPVRVVADRTVANMSDFVVGANEVDYHIAGVNWGRDLPEPVVADIRNVKAGDPSPDGKGALDICRGIEVGHVFQLGTKYSDAMGATFIDESGKAQPMVMGCYGIGITRILGAAIEQNFDDKGIVWPEAIAPFEVVLCPMGYDRSDAVREAADKLYADLAAAGIDVILDDRGERPGVMFADWELIGVPHRLVIGERGLKDGKIEYQGRRDAEATLLPADSAAAAVAEKVRAALAR.

Belongs to the class-II aminoacyl-tRNA synthetase family. ProS type 1 subfamily. As to quaternary structure, homodimer.

It is found in the cytoplasm. It carries out the reaction tRNA(Pro) + L-proline + ATP = L-prolyl-tRNA(Pro) + AMP + diphosphate. Its function is as follows. Catalyzes the attachment of proline to tRNA(Pro) in a two-step reaction: proline is first activated by ATP to form Pro-AMP and then transferred to the acceptor end of tRNA(Pro). As ProRS can inadvertently accommodate and process non-cognate amino acids such as alanine and cysteine, to avoid such errors it has two additional distinct editing activities against alanine. One activity is designated as 'pretransfer' editing and involves the tRNA(Pro)-independent hydrolysis of activated Ala-AMP. The other activity is designated 'posttransfer' editing and involves deacylation of mischarged Ala-tRNA(Pro). The misacylated Cys-tRNA(Pro) is not edited by ProRS. This chain is Proline--tRNA ligase, found in Burkholderia mallei (strain ATCC 23344).